Consider the following 567-residue polypeptide: MFS-type transporter poxA (567 aa).

The segment covering 1-23 (MPASDRTSETGDVEKVTAAETPK) has biased composition (basic and acidic residues). Positions 1 to 24 (MPASDRTSETGDVEKVTAAETPKE) are disordered. The next 10 helical transmembrane spans lie at 35–55 (ALTGLPLYTVLVGLGLALFLG), 77–97 (ADIGWYGAAYPLTMSSIQLLA), 108–128 (LVFLVFFGLFMLGSLLCGVAV), 141–161 (GAGAAGVLSGTLAIVSAVVPL), 165–185 (SLILGLMMSLVGTAVVLGPVI), 197–217 (WCFYLNLPCGGVTLLALILFF), 240–260 (LAGCLGFIPAVVMLLLALQWG), 271–291 (SATIIGLFCGAGVSLILFLIW), 311–331 (IIASCLYGFALLGGYVVVGYF), and 349–369 (VMLLPNVITNFISKAVIGVIV). N370 carries an N-linked (GlcNAc...) asparagine glycan. 4 consecutive transmembrane segments (helical) span residues 372–392 (TGYFNPWLFFGAAVLAIGSGL), 410–430 (ILQGAALGIIQAPTLGVQVAL), 436–456 (LIPVALSLVIFFQYFGSSIML), and 515–535 (AIAGVMWLSTAAALFGFLVSF). The interval 547–567 (EENKKEAAEEEEEVKVAAVEA) is disordered.

The protein belongs to the major facilitator superfamily. TCR/Tet family.

It localises to the cell membrane. MFS-type transporter; part of the gene cluster that mediates the biosynthesis of oxaleimides, cytotoxic compounds containing an unusual disubstituted succinimide moiety. The protein is MFS-type transporter poxA of Penicillium oxalicum (strain 114-2 / CGMCC 5302) (Penicillium decumbens).